A 770-amino-acid polypeptide reads, in one-letter code: MDGFRIIIAEKADAGRRIAYFLSGGQVKSHRAKGTSYLEFEYNGSKTYLIPLSGHIVEADFESGYSDWNKIDLSDLIDARIVKNIKNKVAYQTLQAFRGKVEEIVIATDYDREGELIGVEALDIIKEGKEEIRRAKFSALTKNEILDSFKNLIGVNYSLADAADARESIDLIWGSVLTRFFSVTTGRLGKSFLSAGRVQTPTLAIVVDREREIQSFRPERYWTISITFDKDGQFKARYPENIKDQDTAEKIYEAIKGKNGRVSSYTSKEDHIRRPAPFSTTEFLREASRIGIMPTKAMSIAENLYMRGLISYPRTDNTVYPRSINLKSVLKKLENTAYSKYVKEIETFDRILPSRGRIETTDHPPIYPVDSPKEQLKGDYGRVYDLILRHFLSTLYRDGKKTVAEAEIYVNGYTFKAAGQHTTDRGWTEIYGYDPKDVYLPELTEGEDLKAIDWNIQREETKPPPRYDMSSLLKKMEELNLGTKSTRHDIIGKLIERGFIEGNPVKPTPLGMAFIDAVRSVNSHIADPEMTAKLEEDMDRIEKNEMSKNDVVEESKKMLHEVLSHFLTKTADVKDIITKGINAGQEIGDCPFHEGKKIMVIRDRFTYTVRCEDPSCKINFRIKRNGSITLSDQKCPVCGLPMIKIIRKGQSPEIKCIDPDCSYNRENEDYGECPADHGRLVLRQSKYGKRFLGCSNYPKCTVTYPLPQMGRITKTGEVCPYCGAPILALSRNGRKWKFCPNMQCEYNKKRKPEAAVEKSVRKKGRNASKS.

Residues 4 to 140 (FRIIIAEKAD…EIRRAKFSAL (137 aa)) form the Toprim domain. Positions 10 and 109 each coordinate Mg(2+). Residues 156–563 (NYSLADAADA…ESKKMLHEVL (408 aa)) enclose the Topo IA-type catalytic domain. The segment at 194–199 (SAGRVQ) is interaction with DNA. Residue Tyr-312 is the O-(5'-phospho-DNA)-tyrosine intermediate of the active site. 3 consecutive C4-type zinc fingers follow at residues 611-638 (CEDPSCKINFRIKRNGSITLSDQKCPVC), 673-700 (CPADHGRLVLRQSKYGKRFLGCSNYPKC), and 719-744 (CPYCGAPILALSRNGRKWKFCPNMQC).

It belongs to the type IA topoisomerase family. Monomer. Mg(2+) is required as a cofactor.

The enzyme catalyses ATP-independent breakage of single-stranded DNA, followed by passage and rejoining.. Releases the supercoiling and torsional tension of DNA, which is introduced during the DNA replication and transcription, by transiently cleaving and rejoining one strand of the DNA duplex. Introduces a single-strand break via transesterification at a target site in duplex DNA. The scissile phosphodiester is attacked by the catalytic tyrosine of the enzyme, resulting in the formation of a DNA-(5'-phosphotyrosyl)-enzyme intermediate and the expulsion of a 3'-OH DNA strand. The free DNA strand then undergoes passage around the unbroken strand, thus removing DNA supercoils. Finally, in the religation step, the DNA 3'-OH attacks the covalent intermediate to expel the active-site tyrosine and restore the DNA phosphodiester backbone. In Thermoplasma acidophilum (strain ATCC 25905 / DSM 1728 / JCM 9062 / NBRC 15155 / AMRC-C165), this protein is DNA topoisomerase 1.